Reading from the N-terminus, the 600-residue chain is Glutamine--fructose-6-phosphate aminotransferase [isomerizing] (600 aa).

The active-site Nucleophile; for GATase activity is the Cys-2. Positions 2–217 (CGIVGYIGQL…DKEMVIVTDD (216 aa)) constitute a Glutamine amidotransferase type-2 domain. 2 SIS domains span residues 283-422 (IAAA…KNGI) and 452-590 (IARE…VDKP). Lys-595 serves as the catalytic For Fru-6P isomerization activity.

As to quaternary structure, homodimer.

Its subcellular location is the cytoplasm. It catalyses the reaction D-fructose 6-phosphate + L-glutamine = D-glucosamine 6-phosphate + L-glutamate. Its function is as follows. Catalyzes the first step in hexosamine metabolism, converting fructose-6P into glucosamine-6P using glutamine as a nitrogen source. This is Glutamine--fructose-6-phosphate aminotransferase [isomerizing] from Bacillus subtilis (strain 168).